A 178-amino-acid chain; its full sequence is Killin (178 aa).

The DNA-binding element occupies S8–W50.

Its subcellular location is the nucleus. Its function is as follows. DNA-binding protein involved in S phase checkpoint control-coupled apoptosis by mediating p53/TP53-induced apoptosis. Has the ability to inhibit DNA synthesis and S phase arrest coupled to apoptosis. Has affinity to both double- and single-stranded DNA. The polypeptide is Killin (KLLN) (Homo sapiens (Human)).